Here is a 376-residue protein sequence, read N- to C-terminus: N6-methyladenosine RNA methyltransferase MTA1 (376 aa).

Positions 53–78 (TRRLISSPPPETPFVTPEPKNGPSPL) are disordered.

This sequence belongs to the MT-A70-like family.

It carries out the reaction an adenosine in mRNA + S-adenosyl-L-methionine = an N(6)-methyladenosine in mRNA + S-adenosyl-L-homocysteine + H(+). In terms of biological role, N6-methyladenosine RNA methyltransferase that plays a crucial role in fungal phenotypic traits, virulence, and stress tolerance. Mediates the methylation of mRNAs to produce N6-methyladenosine (m6A)-containing mRNAs. M6A is a modification present at internal sites of mRNAs and some non-coding RNAs and plays a role in mRNA stability and processing. Required for appressorium turgor pressure and regulates autophagosome formation during appressorium formation stage. Specifically, mediates the stability of ATG8 mRNA in a m6A-dependent manner via modification of the m6A site A982 located in 3'UTR region. This chain is N6-methyladenosine RNA methyltransferase MTA1, found in Pyricularia oryzae (strain 70-15 / ATCC MYA-4617 / FGSC 8958) (Rice blast fungus).